Here is an 80-residue protein sequence, read N- to C-terminus: Cell division protein ZapB (80 aa).

The stretch at 3-80 (LEILEQLEAK…GLLGKMDEVE (78 aa)) forms a coiled coil. The tract at residues 41 to 60 (LEQANNGRSEVEQEAQRARD) is disordered. Positions 49 to 60 (SEVEQEAQRARD) are enriched in basic and acidic residues.

This sequence belongs to the ZapB family. As to quaternary structure, homodimer. The ends of the coiled-coil dimer bind to each other, forming polymers. Interacts with FtsZ.

The protein localises to the cytoplasm. Non-essential, abundant cell division factor that is required for proper Z-ring formation. It is recruited early to the divisome by direct interaction with FtsZ, stimulating Z-ring assembly and thereby promoting cell division earlier in the cell cycle. Its recruitment to the Z-ring requires functional FtsA or ZipA. This is Cell division protein ZapB from Aliivibrio fischeri (strain ATCC 700601 / ES114) (Vibrio fischeri).